A 240-amino-acid polypeptide reads, in one-letter code: Uridylate kinase (240 aa).

ATP is bound at residue 13–16 (KASG). The interval 21 to 26 (GSQGFG) is involved in allosteric activation by GTP. A UMP-binding site is contributed by glycine 55. The ATP site is built by glycine 56 and arginine 60. Residues aspartate 75 and 136–143 (TGNPFFTT) contribute to the UMP site. Residues threonine 163, glutamine 164, tyrosine 169, and aspartate 172 each contribute to the ATP site.

The protein belongs to the UMP kinase family. As to quaternary structure, homohexamer.

It localises to the cytoplasm. The enzyme catalyses UMP + ATP = UDP + ADP. It functions in the pathway pyrimidine metabolism; CTP biosynthesis via de novo pathway; UDP from UMP (UMPK route): step 1/1. With respect to regulation, allosterically activated by GTP. Inhibited by UTP. Functionally, catalyzes the reversible phosphorylation of UMP to UDP. The protein is Uridylate kinase of Brucella anthropi (strain ATCC 49188 / DSM 6882 / CCUG 24695 / JCM 21032 / LMG 3331 / NBRC 15819 / NCTC 12168 / Alc 37) (Ochrobactrum anthropi).